The primary structure comprises 213 residues: Protein-L-isoaspartate O-methyltransferase (213 aa).

The active site involves Ser61.

This sequence belongs to the methyltransferase superfamily. L-isoaspartyl/D-aspartyl protein methyltransferase family.

It is found in the cytoplasm. The enzyme catalyses [protein]-L-isoaspartate + S-adenosyl-L-methionine = [protein]-L-isoaspartate alpha-methyl ester + S-adenosyl-L-homocysteine. Its function is as follows. Catalyzes the methyl esterification of L-isoaspartyl residues in peptides and proteins that result from spontaneous decomposition of normal L-aspartyl and L-asparaginyl residues. It plays a role in the repair and/or degradation of damaged proteins. This chain is Protein-L-isoaspartate O-methyltransferase, found in Maricaulis maris (strain MCS10) (Caulobacter maris).